We begin with the raw amino-acid sequence, 454 residues long: MSDFVDEAVLHLKAGDGGHGCVSIHREKFKPLGGPDGGNGGHGGDVILEVDRNTATLLEYQRRPHRKAENGAPGQGSNRSGASGADLVLPVPDGTVVTTLDGEVIADLVGHGTRLVVARGGRGGLGNAALASPKRKAPGFALKGEPGEKVDIRLELKTIADVGLVGFPSAGKSSLIAAMSAARPKIADYPFTTLVPNLGVVEAGQTQYVVADVPGLIPGASEGKGLGLEFLRHVERCSTLLHVLDCATYEPGRDPISDLEAVERELAVYGERTGVDLSDRPRLVALNKIDVPEARELAELVEPMLVERGYRVLQVSAATREGLKELAYALGEQVAAARAARPPEEPTRLILRPREIGEIPFQVIPLGNNVFRVIGDKPTRWVRQTDFSNDEAVGYLADRLNRLGIEEALAEAGATAGAEVHIGDEDNPVVFDWDPTVDSEQTVLGPRGTDPRLS.

The Obg domain maps to 2–159 (SDFVDEAVLH…VDIRLELKTI (158 aa)). Residues 60 to 87 (YQRRPHRKAENGAPGQGSNRSGASGADL) are disordered. Residues 160–335 (ADVGLVGFPS…LAYALGEQVA (176 aa)) enclose the OBG-type G domain. Residues 166 to 173 (GFPSAGKS), 191 to 195 (FTTLV), 212 to 215 (DVPG), 287 to 290 (NKID), and 316 to 318 (SAA) each bind GTP. Residues serine 173 and threonine 193 each coordinate Mg(2+). One can recognise an OCT domain in the interval 353 to 435 (PREIGEIPFQ…DNPVVFDWDP (83 aa)).

Belongs to the TRAFAC class OBG-HflX-like GTPase superfamily. OBG GTPase family. As to quaternary structure, monomer. The cofactor is Mg(2+).

It localises to the cytoplasm. Its function is as follows. An essential GTPase which binds GTP, GDP and possibly (p)ppGpp with moderate affinity, with high nucleotide exchange rates and a fairly low GTP hydrolysis rate. Plays a role in control of the cell cycle, stress response, ribosome biogenesis and in those bacteria that undergo differentiation, in morphogenesis control. The sequence is that of GTPase Obg from Thermobifida fusca (strain YX).